A 183-amino-acid polypeptide reads, in one-letter code: Calmodulin-like protein 3 (183 aa).

4 consecutive EF-hand domains span residues 7-42 (EQIA…LGQS), 43-78 (PTEA…KLRD), 80-115 (GAED…LSDP), and 116-151 (LSDD…KRRQ). Asp20, Asp22, Asp24, Thr26, Glu31, Asp56, Asp58, Ser60, Ser62, Glu67, Asp93, Asp95, Asn97, Glu104, Asp129, Asp131, Asp133, Gln135, and Glu140 together coordinate Ca(2+). The segment at 154 to 183 (MEGHGSGGHRSSNSHKKSGCCGPNSSCTIL) is disordered. Residues Cys173 and Cys174 are each lipidated (S-palmitoyl cysteine). At Cys180 the chain carries Cysteine methyl ester. Cys180 is lipidated: S-farnesyl cysteine. A propeptide spans 181-183 (TIL) (removed in mature form).

Belongs to the calmodulin family.

The protein localises to the membrane. Its function is as follows. Potential calcium sensor. This chain is Calmodulin-like protein 3 (CML3), found in Oryza sativa subsp. japonica (Rice).